We begin with the raw amino-acid sequence, 405 residues long: Protochlorophyllide reductase A, chloroplastic (405 aa).

The transit peptide at 1–69 directs the protein to the chloroplast; the sequence is MALQAASLVS…LRNNKAIIRA (69 aa).

This sequence belongs to the short-chain dehydrogenases/reductases (SDR) family. POR subfamily. In terms of assembly, forms large complexes including TOC33, pPORA and OEP161 during pPORA import into plastids at the plastid envelope membrane. Interacts with CPP1 during plastid import. In terms of tissue distribution, expressed in young seedlings. Not detected in leaves.

It localises to the plastid. Its subcellular location is the chloroplast. It catalyses the reaction chlorophyllide a + NADP(+) = protochlorophyllide a + NADPH + H(+). The protein operates within porphyrin-containing compound metabolism; chlorophyll biosynthesis. Its function is as follows. Phototransformation of protochlorophyllide (Pchlide) to chlorophyllide (Chlide). PORA may also function as a photoprotectant during the transitory stage from dark to light. Functions in skotomorphogenesis, photomorphogenesis and throughout the plant life under specific light conditions. The protein is Protochlorophyllide reductase A, chloroplastic (PORA) of Arabidopsis thaliana (Mouse-ear cress).